We begin with the raw amino-acid sequence, 425 residues long: UDP-N-acetylglucosamine 1-carboxyvinyltransferase (425 aa).

Residue 22 to 23 (KN) participates in phosphoenolpyruvate binding. Arginine 98 is a binding site for UDP-N-acetyl-alpha-D-glucosamine. Cysteine 122 functions as the Proton donor in the catalytic mechanism. Position 122 is a 2-(S-cysteinyl)pyruvic acid O-phosphothioketal (cysteine 122). UDP-N-acetyl-alpha-D-glucosamine-binding positions include 127 to 131 (RPVDQ), aspartate 313, and isoleucine 335.

The protein belongs to the EPSP synthase family. MurA subfamily.

The protein resides in the cytoplasm. It catalyses the reaction phosphoenolpyruvate + UDP-N-acetyl-alpha-D-glucosamine = UDP-N-acetyl-3-O-(1-carboxyvinyl)-alpha-D-glucosamine + phosphate. It functions in the pathway cell wall biogenesis; peptidoglycan biosynthesis. Functionally, cell wall formation. Adds enolpyruvyl to UDP-N-acetylglucosamine. The sequence is that of UDP-N-acetylglucosamine 1-carboxyvinyltransferase from Xylella fastidiosa (strain 9a5c).